Here is a 118-residue protein sequence, read N- to C-terminus: Large ribosomal subunit protein bL19 (118 aa).

The protein belongs to the bacterial ribosomal protein bL19 family.

Functionally, this protein is located at the 30S-50S ribosomal subunit interface and may play a role in the structure and function of the aminoacyl-tRNA binding site. The chain is Large ribosomal subunit protein bL19 (rplS) from Serratia marcescens.